The primary structure comprises 300 residues: Nucleotide-binding protein Dshi_0209 (300 aa).

ATP is bound at residue 20–27; that stretch reads GPSGAGRT. A GTP-binding site is contributed by 67–70; that stretch reads DART.

This sequence belongs to the RapZ-like family.

In terms of biological role, displays ATPase and GTPase activities. The protein is Nucleotide-binding protein Dshi_0209 of Dinoroseobacter shibae (strain DSM 16493 / NCIMB 14021 / DFL 12).